The primary structure comprises 29 residues: Histone H2B (29 aa).

The segment at 1 to 29 (MPEPAKSAPKKGSTRTAAKGGKKRRKSRK) is disordered. 2 positions are modified to N6-acetyllysine: lysine 6 and lysine 11. Residue serine 13 is modified to Phosphoserine. The span at 20-29 (GGKKRRKSRK) shows a compositional bias: basic residues.

Belongs to the histone H2B family. The nucleosome is a histone octamer containing two molecules each of H2A, H2B, H3 and H4 assembled in one H3-H4 heterotetramer and two H2A-H2B heterodimers. The octamer wraps approximately 147 bp of DNA. In terms of processing, monoubiquitination at the C-terminal Lys gives a specific tag for epigenetic transcriptional activation and is also prerequisite for histone H3 'Lys-4' and 'Lys-79' methylation. Post-translationally, phosphorylated during apoptosis; which facilitates apoptotic chromatin condensation.

Its subcellular location is the nucleus. It is found in the chromosome. Its function is as follows. Core component of nucleosome. Nucleosomes wrap and compact DNA into chromatin, limiting DNA accessibility to the cellular machineries which require DNA as a template. Histones thereby play a central role in transcription regulation, DNA repair, DNA replication and chromosomal stability. DNA accessibility is regulated via a complex set of post-translational modifications of histones, also called histone code, and nucleosome remodeling. The chain is Histone H2B from Cyprinus carpio (Common carp).